Here is a 548-residue protein sequence, read N- to C-terminus: MYSLIKSLATFATLFSLTLAKFESSTPPVEVVGNKFYFSNNGSQFLIRGIAYQQDAAGSVSSGYDADPNRKYNDPLADADACKRDVKYFKESNTNTLRVYAIDPDKDHEECMKIFSDAGIYIVADLSEPTVSINRNNPEWNLDLYKRYTKVIDKMQEYSNVLGFFAGNEVTNNRSNTDASAFVKAAIRDMKKYIKESDYRQIPVGYSSNDDEEIRVAIADYFSCGSLDDRADFFGINMYEWCGKSTFETSGYKDRTEEIKNLTIPAFFSEYGCNANRPRLFQEIGTLYSDKMTDVWSGGIVYMYFEEANKYGLVSVDGNSVKTLSDYNNYKSEMNKISPSLAHTSTLSSSDASKTLQCPGTAASTWKAATNLPPTPDESYCDCISKSLECVVADDVDKEDYGDLFGQVCGYIDCSAISADGSKGEYGVASFCSDKDRLSYVLNQYYLDQDKKSSACDFKGSASINSKASASGSCKAVSGVATGKASSSGGSSKSGSSSASASGSSSSSTSSGSSSSSGVKATQQMSMVKLVSIITIVTAFVGGMSVVF.

The signal sequence occupies residues 1 to 20 (MYSLIKSLATFATLFSLTLA). N-linked (GlcNAc...) asparagine glycosylation is present at Asn-41. Cys-82 and Cys-111 form a disulfide bridge. N-linked (GlcNAc...) asparagine glycans are attached at residues Asn-173 and Asn-261. 5 cysteine pairs are disulfide-bonded: Cys-224/Cys-358, Cys-242/Cys-273, Cys-381/Cys-432, Cys-390/Cys-456, and Cys-409/Cys-414. The disordered stretch occupies residues 483–518 (GKASSSGGSSKSGSSSASASGSSSSSTSSGSSSSSG). Ser-517 carries GPI-anchor amidated serine lipidation. Positions 518 to 548 (GVKATQQMSMVKLVSIITIVTAFVGGMSVVF) are cleaved as a propeptide — removed in mature form.

This sequence belongs to the glycosyl hydrolase 72 family.

It localises to the cell membrane. Required for apical cell growth and plays an essential role in morphogenesis. May be integral to the pathogenic ability of the organism. The protein is pH-responsive protein 1 (PHR1) of Candida albicans (strain SC5314 / ATCC MYA-2876) (Yeast).